The sequence spans 293 residues: 4-diphosphocytidyl-2-C-methyl-D-erythritol kinase (293 aa).

K16 is an active-site residue. An ATP-binding site is contributed by 99-109 (PMGAGLGGGSS). D141 is a catalytic residue.

This sequence belongs to the GHMP kinase family. IspE subfamily.

The catalysed reaction is 4-CDP-2-C-methyl-D-erythritol + ATP = 4-CDP-2-C-methyl-D-erythritol 2-phosphate + ADP + H(+). It participates in isoprenoid biosynthesis; isopentenyl diphosphate biosynthesis via DXP pathway; isopentenyl diphosphate from 1-deoxy-D-xylulose 5-phosphate: step 3/6. Catalyzes the phosphorylation of the position 2 hydroxy group of 4-diphosphocytidyl-2C-methyl-D-erythritol. The sequence is that of 4-diphosphocytidyl-2-C-methyl-D-erythritol kinase from Burkholderia lata (strain ATCC 17760 / DSM 23089 / LMG 22485 / NCIMB 9086 / R18194 / 383).